Here is a 990-residue protein sequence, read N- to C-terminus: Protein SUPPRESSOR OF MAX2 1 (990 aa).

The Clp R domain occupies 8–167 (IQQTLTPEAA…KATIEQSLNN (160 aa)). Repeat regions lie at residues 12–83 (LTPE…LERL) and 96–167 (ISNA…SLNN). Residues 818-855 (PKKEHGSGLSFDLNQAADTDDGSHNTSDLTTDNDQDEQ) form a disordered region. The EAR motif lies at 828-832 (FDLNQ).

It belongs to the ClpA/ClpB family. In terms of assembly, interacts probably with TPL/TPR in an EAR-motif dependent manner. Interacts with TPL, TPR1, TPR2 and TPR4. As to expression, highly expressed in dry seeds. Expressed in seedlings, rosette leaves and senescing leaves. Detected in roots and axillary shoots. Expressed in the primary rosette buds and expanding leaves of adult rosettes, the vasculature of the hypocotyls, cotyledons, and mature roots, in the midvein and petioles of young leaves, the young leaf periphery, stomata, and the root caps.

Probable component of a transcriptional corepressor complex that acts downstream of MAX2 to negatively regulate karrikins/strigolactone responses. Probable target of MAX2 during germination and seedling photomorphogenesis. Acts probably specifically in the karrikin pathway. In Arabidopsis thaliana (Mouse-ear cress), this protein is Protein SUPPRESSOR OF MAX2 1.